The following is a 381-amino-acid chain: Estradiol 17-beta-dehydrogenase 2 (381 aa).

Residues 4–24 (FSSESAWLCLTATAVLGGMLL) form a helical; Signal-anchor for type II membrane protein membrane-spanning segment. Residue 83–112 (QKAVLVTGADSGFGHALAKHLDKLGFTVFA) coordinates NAD(+). Ser-220 is a substrate binding site. Catalysis depends on Tyr-233, which acts as the Proton acceptor.

Belongs to the short-chain dehydrogenases/reductases (SDR) family. In terms of assembly, homodimer. Highly expressed in the placenta, and in the small intestine, and liver.

It is found in the endoplasmic reticulum membrane. The enzyme catalyses 17beta-estradiol + NAD(+) = estrone + NADH + H(+). The catalysed reaction is testosterone + NAD(+) = androst-4-ene-3,17-dione + NADH + H(+). It catalyses the reaction 17beta-hydroxy-5alpha-androstan-3-one + NAD(+) = 5alpha-androstan-3,17-dione + NADH + H(+). It carries out the reaction (20S)-hydroxypregn-4-en-3-one + NAD(+) = progesterone + NADH + H(+). Catalyzes the NAD-dependent oxidation of highly active 17beta-hydroxysteroids, such as estradiol (E2), testosterone (T), and dihydrotestosterone (DHT), to their less active forms and thus regulates the biological potency of these steroids. Oxidizes estradiol to estrone, testosterone to androstenedione, and dihydrotestosterone to 5alpha-androstan-3,17-dione. Also has 20-alpha-HSD activity. This is Estradiol 17-beta-dehydrogenase 2 (Hsd17b2) from Rattus norvegicus (Rat).